The sequence spans 260 residues: Kallikrein-8 (260 aa).

The signal sequence occupies residues 1 to 28 (MGRPPPCAIQTWILLFLLMGAWAGLTRA). Positions 29-32 (QGSK) are excised as a propeptide. The Peptidase S1 domain maps to 33-257 (ILEGQECKPH…YTNWIKKTMG (225 aa)). Cystine bridges form between Cys39-Cys173, Cys58-Cys74, Cys145-Cys246, Cys152-Cys218, Cys184-Cys198, and Cys208-Cys233. The Charge relay system role is filled by His73. Asn110 carries an N-linked (GlcNAc...) asparagine glycan. Catalysis depends on Asp120, which acts as the Charge relay system. The Charge relay system role is filled by Ser212.

Belongs to the peptidase S1 family. Kallikrein subfamily. Interacts with SPINK9. As to expression, restricted to hippocampus.

It is found in the secreted. Its subcellular location is the cytoplasm. It catalyses the reaction Cleavage of amide substrates following the basic amino acids Arg or Lys at the P1 position, with a preference for Arg over Lys.. Serine protease which is capable of degrading a number of proteins such as casein, fibrinogen, kininogen, fibronectin and collagen type IV. Also cleaves L1CAM in response to increased neural activity. Induces neurite outgrowth and fasciculation of cultured hippocampal neurons. Plays a role in the formation and maturation of orphan and small synaptic boutons in the Schaffer-collateral pathway, regulates Schaffer-collateral long-term potentiation in the hippocampus and is required for memory acquisition and synaptic plasticity. Involved in skin desquamation and keratinocyte proliferation. Plays a role in the secondary phase of pathogenesis following spinal cord injury. In Rattus norvegicus (Rat), this protein is Kallikrein-8 (Klk8).